Here is a 188-residue protein sequence, read N- to C-terminus: Glutamyl endopeptidase 2 (188 aa).

The cysteines at positions 14 and 34 are disulfide-linked. Residues His33, Asp62, and Ser143 each act as charge relay system in the active site. A disulfide bridge links Cys137 with Cys163.

It belongs to the peptidase S1 family. As to quaternary structure, monomer.

The catalysed reaction is Preferential cleavage: -Glu-|-Xaa- &gt;&gt; -Asp-|-Xaa-. Preference for Pro or Leu at P2 and Phe at P3. Cleavage of -Glu-|-Asp- and -Glu-|-Pro- bonds is slow.. Its function is as follows. Preferentially cleaves peptide bonds on the carboxyl-terminal side of glutamate. The sequence is that of Glutamyl endopeptidase 2 (sprE) from Streptomyces griseus.